Here is a 195-residue protein sequence, read N- to C-terminus: Holliday junction branch migration complex subunit RuvA (195 aa).

The domain I stretch occupies residues 1–64 (MIASIRGVIQ…EDALTLYGFS (64 aa)). Positions 65–139 (DNAQRSLFEQ…GKIDFRQLAA (75 aa)) are domain II. The flexible linker stretch occupies residues 139-143 (ASGST). Residues 144-195 (SVSALDRELSEILVSLGYSAAEAAAAIASLPSDAPPTLEERLRLALRYFGSA) are domain III.

This sequence belongs to the RuvA family. As to quaternary structure, homotetramer. Forms an RuvA(8)-RuvB(12)-Holliday junction (HJ) complex. HJ DNA is sandwiched between 2 RuvA tetramers; dsDNA enters through RuvA and exits via RuvB. An RuvB hexamer assembles on each DNA strand where it exits the tetramer. Each RuvB hexamer is contacted by two RuvA subunits (via domain III) on 2 adjacent RuvB subunits; this complex drives branch migration. In the full resolvosome a probable DNA-RuvA(4)-RuvB(12)-RuvC(2) complex forms which resolves the HJ.

Its subcellular location is the cytoplasm. In terms of biological role, the RuvA-RuvB-RuvC complex processes Holliday junction (HJ) DNA during genetic recombination and DNA repair, while the RuvA-RuvB complex plays an important role in the rescue of blocked DNA replication forks via replication fork reversal (RFR). RuvA specifically binds to HJ cruciform DNA, conferring on it an open structure. The RuvB hexamer acts as an ATP-dependent pump, pulling dsDNA into and through the RuvAB complex. HJ branch migration allows RuvC to scan DNA until it finds its consensus sequence, where it cleaves and resolves the cruciform DNA. The chain is Holliday junction branch migration complex subunit RuvA from Chloroflexus aggregans (strain MD-66 / DSM 9485).